Reading from the N-terminus, the 151-residue chain is Ribosome maturation factor RimP (151 aa).

This sequence belongs to the RimP family.

The protein localises to the cytoplasm. Required for maturation of 30S ribosomal subunits. In Caldanaerobacter subterraneus subsp. tengcongensis (strain DSM 15242 / JCM 11007 / NBRC 100824 / MB4) (Thermoanaerobacter tengcongensis), this protein is Ribosome maturation factor RimP.